We begin with the raw amino-acid sequence, 343 residues long: Protein pelota homolog (343 aa).

The protein belongs to the eukaryotic release factor 1 family. Pelota subfamily. Monomer. The cofactor is a divalent metal cation.

The protein resides in the cytoplasm. In terms of biological role, may function in recognizing stalled ribosomes, interact with stem-loop structures in stalled mRNA molecules, and effect endonucleolytic cleavage of the mRNA. May play a role in the release non-functional ribosomes and degradation of damaged mRNAs. Has endoribonuclease activity. This is Protein pelota homolog from Cenarchaeum symbiosum (strain A).